Reading from the N-terminus, the 132-residue chain is Small ribosomal subunit protein uS8c (132 aa).

Belongs to the universal ribosomal protein uS8 family. Part of the 30S ribosomal subunit.

The protein resides in the plastid. It is found in the chloroplast. Its function is as follows. One of the primary rRNA binding proteins, it binds directly to 16S rRNA central domain where it helps coordinate assembly of the platform of the 30S subunit. The sequence is that of Small ribosomal subunit protein uS8c (rps8) from Trieres chinensis (Marine centric diatom).